The sequence spans 1727 residues: Nucleoporin alm1 (1727 aa).

Coiled coils occupy residues Q57–S361, N443–L463, I542–L740, A804–S1106, G1223–K1427, N1497–A1555, and Q1601–S1664. Over residues E1423 to F1448 the composition is skewed to polar residues. 3 disordered regions span residues E1423–Q1459, E1477–E1500, and L1656–K1727. 2 stretches are compositionally biased toward polar residues: residues A1672 to E1684 and V1702 to D1714. Phosphoserine is present on S1706.

It localises to the nucleus. The protein resides in the nuclear pore complex. Its subcellular location is the nucleus envelope. Functionally, maintains the proteasome and its anchor cut8 at the nucleus envelope and is required for kinetochore component proteostasis. Proper kinetochore stoichiometry ensures the correct attachment of kinetochores to spindle microtubules during cytokinesis. Required for the localization of spindle assembly checkpoint (SAC) protein mad2 and bub1 to the nucleus envelope during interphase, but not their localization during mitosis. This chain is Nucleoporin alm1, found in Schizosaccharomyces pombe (strain 972 / ATCC 24843) (Fission yeast).